We begin with the raw amino-acid sequence, 282 residues long: Tryptophan 2,3-dioxygenase (282 aa).

Substrate contacts are provided by residues 51-55 (FIIQH), Tyr-113, and Arg-117. His-240 is a heme binding site. A substrate-binding site is contributed by Thr-254.

It belongs to the tryptophan 2,3-dioxygenase family. Homotetramer. The cofactor is heme.

It carries out the reaction L-tryptophan + O2 = N-formyl-L-kynurenine. It participates in amino-acid degradation; L-tryptophan degradation via kynurenine pathway; L-kynurenine from L-tryptophan: step 1/2. Its function is as follows. Heme-dependent dioxygenase that catalyzes the oxidative cleavage of the L-tryptophan (L-Trp) pyrrole ring and converts L-tryptophan to N-formyl-L-kynurenine. Catalyzes the oxidative cleavage of the indole moiety. This Polaromonas naphthalenivorans (strain CJ2) protein is Tryptophan 2,3-dioxygenase.